A 190-amino-acid chain; its full sequence is NADH-quinone oxidoreductase subunit C (190 aa).

Belongs to the complex I 30 kDa subunit family. NDH-1 is composed of 14 different subunits. Subunits NuoB, C, D, E, F, and G constitute the peripheral sector of the complex.

It is found in the cell membrane. The enzyme catalyses a quinone + NADH + 5 H(+)(in) = a quinol + NAD(+) + 4 H(+)(out). NDH-1 shuttles electrons from NADH, via FMN and iron-sulfur (Fe-S) centers, to quinones in the respiratory chain. The immediate electron acceptor for the enzyme in this species is believed to be ubiquinone. Couples the redox reaction to proton translocation (for every two electrons transferred, four hydrogen ions are translocated across the cytoplasmic membrane), and thus conserves the redox energy in a proton gradient. This Wolbachia sp. subsp. Brugia malayi (strain TRS) protein is NADH-quinone oxidoreductase subunit C.